We begin with the raw amino-acid sequence, 214 residues long: Small ribosomal subunit protein uS5 (214 aa).

Residues methionine 54–valine 117 enclose the S5 DRBM domain.

Belongs to the universal ribosomal protein uS5 family. Part of the 30S ribosomal subunit. Contacts protein S4.

Its function is as follows. With S4 and S12 plays an important role in translational accuracy. The sequence is that of Small ribosomal subunit protein uS5 from Metallosphaera sedula (strain ATCC 51363 / DSM 5348 / JCM 9185 / NBRC 15509 / TH2).